A 732-amino-acid polypeptide reads, in one-letter code: Ets DNA-binding protein pokkuri (732 aa).

In terms of domain architecture, PNT spans 33–117; it reads SSQLAELKTQ…NVLQMLIIES (85 aa). The interval 133-295 is disordered; that stretch reads SRYPLSPHSH…PPGTPILKDI (163 aa). Pro residues predominate over residues 141–157; sequence SHPPTPTWPPLNAPPEN. The span at 176 to 193 shows a compositional bias: polar residues; sequence NSVTLSPPPSVDSQASSP. Residues 205–240 are compositionally biased toward low complexity; sequence GAAPGSAGGSAPAAGGATNTSNPTSSSASSTGSNGS. A DNA-binding region (ETS) is located at residues 396-479; the sequence is RLLWDFLQQL…QGERHCYQFL (84 aa). Disordered stretches follow at residues 496-548, 590-647, and 674-732; these read QSTP…NGPM, GPPP…TATS, and VAAS…HMQQ. A compositionally biased stretch (low complexity) spans 506–539; that stretch reads SPSMPQGSSQAPGSPAGQNWNPQQQSQQQQQSPQ. Residue Ser-543 is modified to Phosphoserine. Residues 637 to 647 are compositionally biased toward polar residues; that stretch reads LSVSSKSTATS. Phosphoserine occurs at positions 677, 682, and 696. Over residues 690-709 the composition is skewed to polar residues; sequence AGASNASSSPRPMDQASEQA.

Belongs to the ETS family. Post-translationally, phosphorylated in response to MAPK signaling. May be phosphorylated by rl. Expressed in R7 and cone cells of the eye.

Its subcellular location is the nucleus. Ets-related protein that functions as a negative regulator of photoreceptor development acting antagonistically to pnt and the proneural signal mediated by RAS. It acts upstream of SINA to inhibit R7 development. The chain is Ets DNA-binding protein pokkuri (aop) from Drosophila melanogaster (Fruit fly).